Consider the following 423-residue polypeptide: MTTQMEDVEEKVINEEYKIWKRHTPFLYDMVITHALEWPSLTVAWLPVKTSQPNKPYSIEKVILGTHTSDEEQNYLMVAKVHLPVDEASIESLKYDDTKGEVGGIGNVSEKIEIIQKINHEGEVNRARVMPQNHSIIATKTVSSEVYIFDTTKHPLEPTPDGKCSPNLKLTGHKKEGYGISWNPRKEGHLLSCSDDQSICMWDISAASKSDSTLDALNIYNGHTSIVEDVAWHYIHDTFFGSVGDDKKLMIWDTRTGTKPIHVVEAHNSEVNCLSFNPFCEFLVATGSTDKTVALWDMRNLGNRLHSLISHTDEVFQVQFSPHNETVLASCGSDRRVNVWDLSRIGEEQNNEDAADGPPELLFIHGGHTSKISDFSWNPNDPWSIASVAEDNILQIWQMAENIYNDREDDLENSKVTNAQIGE.

WD repeat units follow at residues 119-159 (NHEG…LEPT), 172-212 (GHKK…KSDS), 222-262 (GHTS…KPIH), 266-306 (AHNS…NRLH), 310-350 (SHTD…EEQN), and 367-407 (GHTS…YNDR).

Belongs to the WD repeat RBAP46/RBAP48/MSI1 family. Probably binds directly to helix 1 of the histone fold of histone H4, a region that is not accessible when H4 is in chromatin.

Its subcellular location is the nucleus. Core histone-binding subunit that may target chromatin assembly factors, chromatin remodeling factors and histone deacetylases to their histone substrates in a manner that is regulated by nucleosomal DNA. Component of several complexes which regulate chromatin metabolism. This chain is Probable histone-binding protein rbbD (rbbD), found in Dictyostelium discoideum (Social amoeba).